Here is a 136-residue protein sequence, read N- to C-terminus: Large ribosomal subunit protein uL16c (136 aa).

It belongs to the universal ribosomal protein uL16 family. In terms of assembly, part of the 50S ribosomal subunit.

Its subcellular location is the plastid. It localises to the chloroplast. The chain is Large ribosomal subunit protein uL16c from Citrus sinensis (Sweet orange).